We begin with the raw amino-acid sequence, 212 residues long: Transcriptional regulator GfcR (212 aa).

This sequence belongs to the purine/pyrimidine phosphoribosyltransferase family. GfcR subfamily.

In terms of biological role, DNA-binding transcriptional regulator that functions as a regulator of central sugar catabolic pathways. The protein is Transcriptional regulator GfcR of Halobacterium salinarum (strain ATCC 29341 / DSM 671 / R1).